The primary structure comprises 308 residues: uncharacterized protein (308 aa).

Residues 158–221 (GDSNAETFEE…DSINHGESSE (64 aa)) are disordered. Over residues 206-221 (RNGDRSDSINHGESSE) the composition is skewed to basic and acidic residues.

This is an uncharacterized protein from Arabidopsis thaliana (Mouse-ear cress).